Reading from the N-terminus, the 55-residue chain is Preprotein translocase subunit SecG (55 aa).

The Cytoplasmic portion of the chain corresponds to 1–31; that stretch reads MPKNNTNENFQSGAGLIRYFNEEEIKGPALD. A helical transmembrane segment spans residues 32–51; the sequence is PKLIIYIGIAMAVIVELAKI. The Extracellular portion of the chain corresponds to 52–55; the sequence is FWPV.

Belongs to the SEC61-beta family. As to quaternary structure, component of the protein translocase complex. Heterotrimer consisting of alpha (SecY), beta (SecG) and gamma (SecE) subunits. Can form oligomers of the heterotrimer.

The protein resides in the cell membrane. Involved in protein export. The function of the beta subunit is unknown, but it may be involved in stabilization of the trimeric complex. The sequence is that of Preprotein translocase subunit SecG from Picrophilus torridus (strain ATCC 700027 / DSM 9790 / JCM 10055 / NBRC 100828 / KAW 2/3).